A 429-amino-acid polypeptide reads, in one-letter code: Ribosomal RNA small subunit methyltransferase B (429 aa).

S-adenosyl-L-methionine-binding positions include 254 to 260 (CAAPGGK), aspartate 277, aspartate 303, and aspartate 322. Catalysis depends on cysteine 375, which acts as the Nucleophile. Residues 397-419 (ALSETGTPDQPGQQNLPGGEEGD) are disordered. Over residues 400-412 (ETGTPDQPGQQNL) the composition is skewed to polar residues.

The protein belongs to the class I-like SAM-binding methyltransferase superfamily. RsmB/NOP family.

Its subcellular location is the cytoplasm. The enzyme catalyses cytidine(967) in 16S rRNA + S-adenosyl-L-methionine = 5-methylcytidine(967) in 16S rRNA + S-adenosyl-L-homocysteine + H(+). Its function is as follows. Specifically methylates the cytosine at position 967 (m5C967) of 16S rRNA. The polypeptide is Ribosomal RNA small subunit methyltransferase B (Salmonella enteritidis PT4 (strain P125109)).